Here is a 327-residue protein sequence, read N- to C-terminus: Alkene monooxygenase system, ferredoxin--NAD(+) reductase component (327 aa).

One can recognise a 2Fe-2S ferredoxin-type domain in the interval 1–89 (MRLNDGRSFS…DLEINVRAGD (89 aa)). Residues Cys32, Cys37, Cys40, and Cys73 each contribute to the [2Fe-2S] cluster site. One can recognise an FAD-binding FR-type domain in the interval 96–194 (PRRHAARVTV…EGPYGRAYLR (99 aa)).

This sequence belongs to the bacterial ring-hydroxylating dioxygenase ferredoxin reductase family. In terms of assembly, monomer. The alkene monooxygenase multicomponent enzyme system is composed of an electron transfer component and a monooxygenase component interacting with the effector protein XamoD. The electron transfer component is composed of a ferredoxin reductase (XamoF) and a ferredoxin (XamoC), and the monooxygenase component is formed by a heterohexamer (dimer of heterotrimers) of two alpha subunits (XamoA), two beta subunits (XamoE) and two gamma subunits (XamoB). FAD is required as a cofactor. [2Fe-2S] cluster serves as cofactor.

Its subcellular location is the cytoplasm. The catalysed reaction is 2 reduced [2Fe-2S]-[ferredoxin] + NAD(+) + H(+) = 2 oxidized [2Fe-2S]-[ferredoxin] + NADH. Functionally, reductase component of the alkene monooxygenase multicomponent enzyme system which catalyzes the O2- and NADH-dependent epoxidation of short chain (C2 to C6) alkenes to their corresponding epoxides. Ferredoxin reductase catalyzes the transfer of electrons from NADH to ferredoxin (XamoC). NADPH is also effective but with a rate approximately 3-fold lower than with NADH. This Xanthobacter autotrophicus (strain ATCC BAA-1158 / Py2) protein is Alkene monooxygenase system, ferredoxin--NAD(+) reductase component.